A 223-amino-acid chain; its full sequence is Phosphoribosylformylglycinamidine synthase subunit PurQ (223 aa).

Residues 4–223 (FAVVVFPGTN…FKGMVEWVRS (220 aa)) enclose the Glutamine amidotransferase type-1 domain. Residue Cys-85 is the Nucleophile of the active site. Active-site residues include His-196 and Glu-198.

Part of the FGAM synthase complex composed of 1 PurL, 1 PurQ and 2 PurS subunits.

It localises to the cytoplasm. It carries out the reaction N(2)-formyl-N(1)-(5-phospho-beta-D-ribosyl)glycinamide + L-glutamine + ATP + H2O = 2-formamido-N(1)-(5-O-phospho-beta-D-ribosyl)acetamidine + L-glutamate + ADP + phosphate + H(+). The enzyme catalyses L-glutamine + H2O = L-glutamate + NH4(+). It participates in purine metabolism; IMP biosynthesis via de novo pathway; 5-amino-1-(5-phospho-D-ribosyl)imidazole from N(2)-formyl-N(1)-(5-phospho-D-ribosyl)glycinamide: step 1/2. Part of the phosphoribosylformylglycinamidine synthase complex involved in the purines biosynthetic pathway. Catalyzes the ATP-dependent conversion of formylglycinamide ribonucleotide (FGAR) and glutamine to yield formylglycinamidine ribonucleotide (FGAM) and glutamate. The FGAM synthase complex is composed of three subunits. PurQ produces an ammonia molecule by converting glutamine to glutamate. PurL transfers the ammonia molecule to FGAR to form FGAM in an ATP-dependent manner. PurS interacts with PurQ and PurL and is thought to assist in the transfer of the ammonia molecule from PurQ to PurL. This chain is Phosphoribosylformylglycinamidine synthase subunit PurQ, found in Pyrococcus furiosus (strain ATCC 43587 / DSM 3638 / JCM 8422 / Vc1).